Reading from the N-terminus, the 143-residue chain is Transcriptional regulator MraZ (143 aa).

SpoVT-AbrB domains are found at residues E5–E47 and A76–L119.

Belongs to the MraZ family. As to quaternary structure, forms oligomers.

Its subcellular location is the cytoplasm. It is found in the nucleoid. The polypeptide is Transcriptional regulator MraZ (Desulfitobacterium hafniense (strain DSM 10664 / DCB-2)).